We begin with the raw amino-acid sequence, 72 residues long: Translation initiation factor IF-1 (72 aa).

Residues 1 to 72 (MAKEDTIQMQ…TRARIVFRAR (72 aa)) form the S1-like domain.

It belongs to the IF-1 family. As to quaternary structure, component of the 30S ribosomal translation pre-initiation complex which assembles on the 30S ribosome in the order IF-2 and IF-3, IF-1 and N-formylmethionyl-tRNA(fMet); mRNA recruitment can occur at any time during PIC assembly.

The protein localises to the cytoplasm. Its function is as follows. One of the essential components for the initiation of protein synthesis. Stabilizes the binding of IF-2 and IF-3 on the 30S subunit to which N-formylmethionyl-tRNA(fMet) subsequently binds. Helps modulate mRNA selection, yielding the 30S pre-initiation complex (PIC). Upon addition of the 50S ribosomal subunit IF-1, IF-2 and IF-3 are released leaving the mature 70S translation initiation complex. In Neisseria gonorrhoeae (strain ATCC 700825 / FA 1090), this protein is Translation initiation factor IF-1.